Here is a 174-residue protein sequence, read N- to C-terminus: Small ribosomal subunit protein uS5 (174 aa).

One can recognise an S5 DRBM domain in the interval 20–83 (IEDQLVAINR…EAGKKRMIKV (64 aa)).

The protein belongs to the universal ribosomal protein uS5 family. In terms of assembly, part of the 30S ribosomal subunit. Contacts proteins S4 and S8.

In terms of biological role, with S4 and S12 plays an important role in translational accuracy. Functionally, located at the back of the 30S subunit body where it stabilizes the conformation of the head with respect to the body. The protein is Small ribosomal subunit protein uS5 of Lactobacillus gasseri (strain ATCC 33323 / DSM 20243 / BCRC 14619 / CIP 102991 / JCM 1131 / KCTC 3163 / NCIMB 11718 / NCTC 13722 / AM63).